A 359-amino-acid chain; its full sequence is MASNLPQERNHEACLLIRDLDPMVTESLLMELFIQAAPVVKVFIPKDKLTQQHSGRAYVEFQSSSDAEYALKVMKFVRLFNKEIKIKKENKDKVDIGANLFIGNLDADVDERILHDTFSRFGTIIFTPKVMRDENGVSKGFAFINFDSFEASDAAIEAMNSQFLCNKPISVTYARKKDSNERHGSSAERIIAASRNTGYLNQQQQQQSSSTSSTSTISTSTPQQQQQQQSQPLPPPIVTAGGIIHQQQIQQQQQLQQQQQQQLQLQQLQLQQLQQQQQQQQQQQQQQQQQQQQQQQQQQQQQHHPHHQHPIPHPHPLPHQLRPHPHPHHPPPPPFNPMLMQFNPMMMPFGGMPPPPPHK.

2 RRM domains span residues 13-91 and 98-176; these read ACLL…KENK and ANLF…YARK. 2 disordered regions span residues 198 to 239 and 293 to 337; these read GYLN…PIVT and QQQQ…PFNP. Low complexity-rich tracts occupy residues 202–231 and 293–302; these read QQQQ…QQSQ and QQQQQQQQQQ. Basic residues predominate over residues 303 to 312; that stretch reads HHPHHQHPIP.

Belongs to the SF3B4 family. In terms of assembly, component of splicing factor SF3B which is composed of at least eight subunits.

The protein localises to the nucleus. Its function is as follows. Subunit of the splicing factor SF3B required for 'A' complex assembly formed by the stable binding of U2 snRNP to the branchpoint sequence (BPS) in pre-mRNA. Sequence independent binding of SF3A/SF3B complex upstream of the branch site is essential, it may anchor U2 snRNP to the pre-mRNA. May also be involved in the assembly of the 'E' complex. Has been found in complex 'B' and 'C' as well. The protein is Splicing factor 3B subunit 4 (sf3b4) of Dictyostelium discoideum (Social amoeba).